Here is a 238-residue protein sequence, read N- to C-terminus: Adenylate dimethylallyltransferase (238 aa).

This sequence belongs to the isopentenyl transferase family.

It carries out the reaction dimethylallyl diphosphate + AMP = N(6)-(dimethylallyl)adenosine 5'-phosphate + diphosphate. Its function is as follows. Transfers dimethylallyl groups to AMP as part of the biosynthesis of cytokinin phytohormones. The protein is Adenylate dimethylallyltransferase (tzs) of Ralstonia nicotianae (strain ATCC BAA-1114 / GMI1000) (Ralstonia solanacearum).